The primary structure comprises 288 residues: Stage IV sporulation protein FB (288 aa).

Residues 1 to 10 (MNKWLDLILK) lie on the Mother cell cytoplasmic side of the membrane. The helical transmembrane segment at 11–30 (IHVHPFLWIIAALGLLTGHM) threads the bilayer. Residue Lys-31 is a topological domain, forespore intermembrane space. Residues 32–56 (ALLCLLLIVLIHELGHAALAVFFSW) form a helical membrane-spanning segment. Residue His-43 participates in Zn(2+) binding. Residue Glu-44 is part of the active site. His-47 contributes to the Zn(2+) binding site. Residues 57 to 83 (RIKRVFLLPFGGTVEVEEHGNRPLKEE) lie on the Mother cell cytoplasmic side of the membrane. The chain crosses the membrane as a helical span at residues 84–105 (FAVIIAGPLQHIWLQFAAWMLA). The Forespore intermembrane space portion of the chain corresponds to 106 to 126 (EVSVIHQHTFELFTFYNLSIL). Residues 127–146 (FVNLLPIWPLDGGKLLFLLF) form a helical membrane-spanning segment. Asp-137 is a binding site for Zn(2+). At 147 to 161 (SKQLPFQKAHRLNLK) the chain is on the mother cell cytoplasmic side. A helical membrane pass occupies residues 162 to 178 (TSLCFCLLLGCWVLFVI). Pro-179 is a topological domain (forespore intermembrane space). The helical transmembrane segment at 180–199 (LQISAWVLFVFLAVSLFEEY) threads the bilayer. Over 200 to 288 (RQRHYIHVRF…SSMEELLLPY (89 aa)) the chain is Mother cell cytoplasmic.

It belongs to the peptidase M50B family. As to quaternary structure, forms a complex with SpoIVFA and BofA localized in the mother-cell membrane surrounding the forespore. It depends on Zn(2+) as a cofactor.

It is found in the forespore outer membrane. In terms of biological role, implicated in the coupling of mother cell to forespore gene expression. Required for spore formation. Processes the pro-sigma K factor. The chain is Stage IV sporulation protein FB (spoIVFB) from Bacillus subtilis (strain 168).